Here is a 271-residue protein sequence, read N- to C-terminus: Formamidopyrimidine-DNA glycosylase (271 aa).

P2 functions as the Schiff-base intermediate with DNA in the catalytic mechanism. E3 functions as the Proton donor in the catalytic mechanism. Residue K56 is the Proton donor; for beta-elimination activity of the active site. The DNA site is built by H89, R107, and R151. The segment at 236 to 270 (MVYDRAGLPCRVCAAPIKSIRQGQRSSFYCATCQK) adopts an FPG-type zinc-finger fold. R260 serves as the catalytic Proton donor; for delta-elimination activity.

The protein belongs to the FPG family. As to quaternary structure, monomer. Requires Zn(2+) as cofactor.

It catalyses the reaction Hydrolysis of DNA containing ring-opened 7-methylguanine residues, releasing 2,6-diamino-4-hydroxy-5-(N-methyl)formamidopyrimidine.. It carries out the reaction 2'-deoxyribonucleotide-(2'-deoxyribose 5'-phosphate)-2'-deoxyribonucleotide-DNA = a 3'-end 2'-deoxyribonucleotide-(2,3-dehydro-2,3-deoxyribose 5'-phosphate)-DNA + a 5'-end 5'-phospho-2'-deoxyribonucleoside-DNA + H(+). Its function is as follows. Involved in base excision repair of DNA damaged by oxidation or by mutagenic agents. Acts as a DNA glycosylase that recognizes and removes damaged bases. Has a preference for oxidized purines, such as 7,8-dihydro-8-oxoguanine (8-oxoG). Has AP (apurinic/apyrimidinic) lyase activity and introduces nicks in the DNA strand. Cleaves the DNA backbone by beta-delta elimination to generate a single-strand break at the site of the removed base with both 3'- and 5'-phosphates. The chain is Formamidopyrimidine-DNA glycosylase from Polaromonas naphthalenivorans (strain CJ2).